The following is a 1071-amino-acid chain: ATP-dependent helicase/deoxyribonuclease subunit B (1071 aa).

This sequence belongs to the helicase family. AddB/RexB type 2 subfamily. As to quaternary structure, heterodimer of AddA and RexB. It depends on Mg(2+) as a cofactor.

The heterodimer acts as both an ATP-dependent DNA helicase and an ATP-dependent, dual-direction single-stranded exonuclease. Recognizes the chi site generating a DNA molecule suitable for the initiation of homologous recombination. This subunit has 5' -&gt; 3' nuclease activity but not helicase activity. This chain is ATP-dependent helicase/deoxyribonuclease subunit B, found in Streptococcus pyogenes serotype M6 (strain ATCC BAA-946 / MGAS10394).